A 423-amino-acid chain; its full sequence is TPR repeat-containing protein YpiA (423 aa).

9 TPR repeats span residues 33 to 66 (DEDKAIAAQLYYEWGDVEKAISLISDLHDLYPNE), 67 to 100 (TELTNFYAELLIDIDEEEKALAVLETIPETDPSY), 135 to 168 (PVIDFALGELYFAQGAYAKAVQYFKTTAEEQSEI), 171 to 204 (VNVHQRLAESLSASGEFEDAIPWYEKAVDENPDP), 238 to 271 (TSLYMPLSKSYEAEGMYEEALKTAKEGIRYDEYN), 272 to 305 (KELFLYAAKMALKIGKSEEGKKLLQEALALDPGF), 306 to 339 (VEALHTLLAVYHKEEDYDQIIDLIQEVRSYGEED), 340 to 373 (PKYNWYLASAYTELEQYEEAKQSFEAAYLHYRED), and 374 to 407 (RDFLYEYASFLLEEGLQKEALPLLKKVLEMDGAN).

In terms of assembly, interacts with the RNA polymerase core.

The polypeptide is TPR repeat-containing protein YpiA (ypiA) (Bacillus subtilis (strain 168)).